The primary structure comprises 339 residues: 1-aminocyclopropane-1-carboxylate deaminase (339 aa).

Lys52 carries the N6-(pyridoxal phosphate)lysine modification. Ser79 serves as the catalytic Nucleophile.

It belongs to the ACC deaminase/D-cysteine desulfhydrase family. In terms of assembly, homotrimer. Pyridoxal 5'-phosphate is required as a cofactor.

The catalysed reaction is 1-aminocyclopropane-1-carboxylate + H2O = 2-oxobutanoate + NH4(+). Its function is as follows. Catalyzes a cyclopropane ring-opening reaction, the irreversible conversion of 1-aminocyclopropane-1-carboxylate (ACC) to ammonia and alpha-ketobutyrate. Allows growth on ACC as a nitrogen source. The protein is 1-aminocyclopropane-1-carboxylate deaminase of Bradyrhizobium sp. (strain ORS 278).